A 339-amino-acid chain; its full sequence is MTIIVTGAAGFIGANIVQALNVRGEKNIIAVDDLRPADKYRNLADLDIIDYLDKDEFLEAFRSGRFGKVKAVFHEGACSDTMETDGIFMMANNYRYTMDLLDICTAQKVQLLYASSAATYGGSDVFVESREHEKPLNIYGYSKFLFDQVMRKRFAEKTNTAQVVGFRYFNVYGPRESHKGRMASVAFHQYYQYKANGHVKLFGEYGGYGAGEQSRDFVSVEDVVKVNLFFLDHPEISGIFNLGSGRAQPFNDVAHAVANAMRKLDKAAPASLQELVKEKAIEYIPFPDALKGRYQCFTQADLTKLRAAGYAEPFLTVEQGVGRYIEWLEANSSFLANPL.

Residues 11–12 (FI), 32–33 (DD), K39, K54, 75–79 (EGACS), and N92 contribute to the NADP(+) site. Residue Y139 is the Proton acceptor of the active site. K143 lines the NADP(+) pocket. N170 is a binding site for substrate. The NADP(+) site is built by V171 and K179. Residue K179 is the Proton acceptor of the active site. Substrate contacts are provided by residues R181, H188, 202–205 (FGEY), R215, and Y294.

This sequence belongs to the NAD(P)-dependent epimerase/dehydratase family. HldD subfamily. Homopentamer. The cofactor is NADP(+).

It catalyses the reaction ADP-D-glycero-beta-D-manno-heptose = ADP-L-glycero-beta-D-manno-heptose. Its pathway is nucleotide-sugar biosynthesis; ADP-L-glycero-beta-D-manno-heptose biosynthesis; ADP-L-glycero-beta-D-manno-heptose from D-glycero-beta-D-manno-heptose 7-phosphate: step 4/4. In terms of biological role, catalyzes the interconversion between ADP-D-glycero-beta-D-manno-heptose and ADP-L-glycero-beta-D-manno-heptose via an epimerization at carbon 6 of the heptose. The chain is ADP-L-glycero-D-manno-heptose-6-epimerase from Polynucleobacter necessarius subsp. necessarius (strain STIR1).